Consider the following 527-residue polypeptide: Peptide chain release factor 3 (527 aa).

The 269-residue stretch at Ala-9–Leu-277 folds into the tr-type G domain. GTP is bound by residues Ser-18–Thr-25, Asp-86–His-90, and Asn-140–Asp-143.

Belongs to the TRAFAC class translation factor GTPase superfamily. Classic translation factor GTPase family. PrfC subfamily.

It is found in the cytoplasm. Increases the formation of ribosomal termination complexes and stimulates activities of RF-1 and RF-2. It binds guanine nucleotides and has strong preference for UGA stop codons. It may interact directly with the ribosome. The stimulation of RF-1 and RF-2 is significantly reduced by GTP and GDP, but not by GMP. The polypeptide is Peptide chain release factor 3 (Pseudomonas entomophila (strain L48)).